Consider the following 166-residue polypeptide: 6,7-dimethyl-8-ribityllumazine synthase (166 aa).

5-amino-6-(D-ribitylamino)uracil is bound by residues Phe-22, 56 to 58 (SME), and 80 to 82 (AVI). 85-86 (ET) is a binding site for (2S)-2-hydroxy-3-oxobutyl phosphate. The active-site Proton donor is the His-88. Position 113 (Phe-113) interacts with 5-amino-6-(D-ribitylamino)uracil. Arg-127 is a binding site for (2S)-2-hydroxy-3-oxobutyl phosphate.

This sequence belongs to the DMRL synthase family.

The enzyme catalyses (2S)-2-hydroxy-3-oxobutyl phosphate + 5-amino-6-(D-ribitylamino)uracil = 6,7-dimethyl-8-(1-D-ribityl)lumazine + phosphate + 2 H2O + H(+). Its pathway is cofactor biosynthesis; riboflavin biosynthesis; riboflavin from 2-hydroxy-3-oxobutyl phosphate and 5-amino-6-(D-ribitylamino)uracil: step 1/2. Catalyzes the formation of 6,7-dimethyl-8-ribityllumazine by condensation of 5-amino-6-(D-ribitylamino)uracil with 3,4-dihydroxy-2-butanone 4-phosphate. This is the penultimate step in the biosynthesis of riboflavin. This is 6,7-dimethyl-8-ribityllumazine synthase from Thermotoga neapolitana (strain ATCC 49049 / DSM 4359 / NBRC 107923 / NS-E).